Consider the following 67-residue polypeptide: uncharacterized protein (67 aa).

A helical transmembrane segment spans residues 12-34 (YYYAHQTVCITSTGFALCFVVQA).

The protein resides in the membrane. This is an uncharacterized protein from Saccharomyces cerevisiae (strain ATCC 204508 / S288c) (Baker's yeast).